A 1403-amino-acid polypeptide reads, in one-letter code: Sushi, nidogen and EGF-like domain-containing protein 1 (1403 aa).

Positions 1-24 (MRLGAAWALLLAAALGLGTRGVRA) are cleaved as a signal peptide. The 156-residue stretch at 103 to 258 (AFWADVDNRR…GRWAFRIDDA (156 aa)) folds into the NIDO domain. 3 EGF-like domains span residues 268–309 (TTSV…RRCH), 311–347 (DVNE…PTCE), and 349–385 (AQSP…ATCE). 18 disulfide bridges follow: cysteine 272-cysteine 284, cysteine 278-cysteine 297, cysteine 299-cysteine 308, cysteine 315-cysteine 326, cysteine 320-cysteine 335, cysteine 337-cysteine 346, cysteine 353-cysteine 364, cysteine 358-cysteine 373, cysteine 375-cysteine 384, cysteine 391-cysteine 402, cysteine 396-cysteine 411, cysteine 413-cysteine 422, cysteine 433-cysteine 444, cysteine 438-cysteine 453, cysteine 455-cysteine 464, cysteine 472-cysteine 480, cysteine 474-cysteine 488, and cysteine 490-cysteine 499. A glycan (N-linked (GlcNAc...) asparagine) is linked at asparagine 292. An EGF-like 4; calcium-binding domain is found at 387–423 (DVDECSSDPCQNGGSCVDLVGNYSCICVEPFEGPQCE). N-linked (GlcNAc...) asparagine glycosylation occurs at asparagine 408. 2 consecutive EGF-like domains span residues 429–465 (VPSP…LDCR) and 468–500 (ILND…LLCE). An N-linked (GlcNAc...) asparagine glycan is attached at asparagine 484. Residue asparagine 536 is glycosylated (N-linked (GlcNAc...) asparagine). EGF-like domains lie at 541-577 (LPSP…RHCE), 580-616 (RPHL…RHCE), 619-655 (KPDS…RHCE), and 657-693 (APSP…HRCQ). 26 disulfide bridges follow: cysteine 545–cysteine 556, cysteine 550–cysteine 565, cysteine 567–cysteine 576, cysteine 584–cysteine 595, cysteine 589–cysteine 604, cysteine 606–cysteine 615, cysteine 623–cysteine 634, cysteine 628–cysteine 643, cysteine 645–cysteine 654, cysteine 661–cysteine 672, cysteine 666–cysteine 681, cysteine 683–cysteine 692, cysteine 698–cysteine 739, cysteine 724–cysteine 751, cysteine 757–cysteine 768, cysteine 762–cysteine 777, cysteine 779–cysteine 788, cysteine 795–cysteine 806, cysteine 800–cysteine 815, cysteine 817–cysteine 826, cysteine 833–cysteine 844, cysteine 838–cysteine 853, cysteine 855–cysteine 864, cysteine 871–cysteine 882, cysteine 876–cysteine 891, and cysteine 893–cysteine 902. The 58-residue stretch at 696-753 (VDCGHPEEVEHATMRFNGTHVGSVALYTCEPGFSLSALSHIRVCQPQGVWSQPPQCIE) folds into the Sushi domain. Asparagine 712 is a glycosylation site (N-linked (GlcNAc...) asparagine). Positions 753–789 (EVDECRSQPCLHGGSCQDLIADYQCLCSPGYEGVHCE) constitute an EGF-like 11; calcium-binding domain. An EGF-like 12; calcium-binding domain is found at 791–827 (ETDECQAQPCRNGGSCRDLPRAFICQCPEGFVGIHCE). EGF-like domains are found at residues 829 to 865 (EVDA…YNCE) and 867 to 903 (VSDP…KDCT). Asparagine 886 carries N-linked (GlcNAc...) asparagine glycosylation. Fibronectin type-III domains follow at residues 908–1006 (PPTA…TRPR), 1007–1105 (PIED…TRPL), and 1106–1200 (PPAN…SPRD). N-linked (GlcNAc...) asparagine glycosylation is found at asparagine 977, asparagine 1015, asparagine 1109, asparagine 1139, and asparagine 1298. One can recognise an EGF-like 15 domain in the interval 1306-1342 (TPGSCSEDACQNGGTCVPGADAHSCDCRPGFKGRHCE). 3 disulfides stabilise this stretch: cysteine 1310–cysteine 1321, cysteine 1315–cysteine 1330, and cysteine 1332–cysteine 1341.

Post-translationally, phosphorylated on serine and threonine residues. N-glycosylated. As to expression, expressed in lung.

The protein localises to the secreted. It is found in the extracellular space. Its subcellular location is the extracellular matrix. The sequence is that of Sushi, nidogen and EGF-like domain-containing protein 1 from Mus musculus (Mouse).